A 201-amino-acid polypeptide reads, in one-letter code: Beta-lactamase inhibitory protein (201 aa).

The signal sequence occupies residues 1-36 (MRTVGIGAGVRRLGRAVVMAAAVGGLVLGSAGASNA). Tandem repeats lie at residues 37–112 (AGVM…EKLL) and 116–201 (APTL…WDLV). Cystine bridges form between Cys66-Cys78 and Cys145-Cys167.

Interacts with E.coli beta-lactamase TEM-1; interaction inhibits hydrolysis of beta-lactam antibiotics. Interacts with K.pneumoniae beta-lactamase SHV-1. Interacts with K.pneumoniae beta-lactamases KPC-2 and KPC-3; interaction inhibits hydrolysis of beta-lactam antibiotics. Interacts with E.coli beta-lactamases CTX-M-14 and CTX-M-15; interaction inhibits hydrolysis of beta-lactam antibiotics.

It is found in the secreted. In terms of biological role, inhibits a wide variety of beta lactamases. This chain is Beta-lactamase inhibitory protein, found in Streptomyces clavuligerus.